The chain runs to 492 residues: Steroid 21-hydroxylase (492 aa).

Heme b contacts are provided by Arg-91 and Lys-120. Arg-231 lines the 17alpha-hydroxyprogesterone pocket. Residue Arg-231 coordinates progesterone. Heme b is bound by residues His-363, Arg-424, and Cys-426.

Belongs to the cytochrome P450 family. Requires heme b as cofactor.

The protein resides in the endoplasmic reticulum membrane. Its subcellular location is the microsome membrane. It carries out the reaction 17alpha-hydroxyprogesterone + reduced [NADPH--hemoprotein reductase] + O2 = 11-deoxycortisol + oxidized [NADPH--hemoprotein reductase] + H2O + H(+). The enzyme catalyses progesterone + reduced [NADPH--hemoprotein reductase] + O2 = 21-hydroxyprogesterone + oxidized [NADPH--hemoprotein reductase] + H2O + H(+). Functionally, specifically catalyzes the 21-hydroxylation of steroids. Required for the adrenal synthesis of mineralocorticoids and glucocorticoids. This Lynx lynx (Eurasian lynx) protein is Steroid 21-hydroxylase (CYP21).